The following is a 160-amino-acid chain: Glucan endo-1,3-beta-glucosidase, acidic isoform PR-O (160 aa).

Glutamate 81 functions as the Nucleophile in the catalytic mechanism.

This sequence belongs to the glycosyl hydrolase 17 family. The N-terminus is blocked.

It localises to the secreted. The protein localises to the extracellular space. It catalyses the reaction Hydrolysis of (1-&gt;3)-beta-D-glucosidic linkages in (1-&gt;3)-beta-D-glucans.. Its function is as follows. Implicated in the defense of plants against pathogens. The sequence is that of Glucan endo-1,3-beta-glucosidase, acidic isoform PR-O (PR0) from Nicotiana tabacum (Common tobacco).